A 315-amino-acid polypeptide reads, in one-letter code: 4-hydroxy-3-methylbut-2-enyl diphosphate reductase (315 aa).

Cysteine 12 serves as a coordination point for [4Fe-4S] cluster. Residues histidine 41 and histidine 74 each contribute to the (2E)-4-hydroxy-3-methylbut-2-enyl diphosphate site. Dimethylallyl diphosphate is bound by residues histidine 41 and histidine 74. Residues histidine 41 and histidine 74 each coordinate isopentenyl diphosphate. A [4Fe-4S] cluster-binding site is contributed by cysteine 96. Position 124 (histidine 124) interacts with (2E)-4-hydroxy-3-methylbut-2-enyl diphosphate. Histidine 124 is a binding site for dimethylallyl diphosphate. Isopentenyl diphosphate is bound at residue histidine 124. Glutamate 126 (proton donor) is an active-site residue. Threonine 168 is a binding site for (2E)-4-hydroxy-3-methylbut-2-enyl diphosphate. Cysteine 198 is a binding site for [4Fe-4S] cluster. Residues serine 226, serine 227, asparagine 228, and serine 270 each contribute to the (2E)-4-hydroxy-3-methylbut-2-enyl diphosphate site. Dimethylallyl diphosphate-binding residues include serine 226, serine 227, asparagine 228, and serine 270. Residues serine 226, serine 227, asparagine 228, and serine 270 each coordinate isopentenyl diphosphate.

This sequence belongs to the IspH family. It depends on [4Fe-4S] cluster as a cofactor.

The enzyme catalyses isopentenyl diphosphate + 2 oxidized [2Fe-2S]-[ferredoxin] + H2O = (2E)-4-hydroxy-3-methylbut-2-enyl diphosphate + 2 reduced [2Fe-2S]-[ferredoxin] + 2 H(+). It carries out the reaction dimethylallyl diphosphate + 2 oxidized [2Fe-2S]-[ferredoxin] + H2O = (2E)-4-hydroxy-3-methylbut-2-enyl diphosphate + 2 reduced [2Fe-2S]-[ferredoxin] + 2 H(+). Its pathway is isoprenoid biosynthesis; dimethylallyl diphosphate biosynthesis; dimethylallyl diphosphate from (2E)-4-hydroxy-3-methylbutenyl diphosphate: step 1/1. It functions in the pathway isoprenoid biosynthesis; isopentenyl diphosphate biosynthesis via DXP pathway; isopentenyl diphosphate from 1-deoxy-D-xylulose 5-phosphate: step 6/6. In terms of biological role, catalyzes the conversion of 1-hydroxy-2-methyl-2-(E)-butenyl 4-diphosphate (HMBPP) into a mixture of isopentenyl diphosphate (IPP) and dimethylallyl diphosphate (DMAPP). Acts in the terminal step of the DOXP/MEP pathway for isoprenoid precursor biosynthesis. The polypeptide is 4-hydroxy-3-methylbut-2-enyl diphosphate reductase (Pseudomonas putida (strain W619)).